We begin with the raw amino-acid sequence, 282 residues long: Elongation factor Ts (282 aa).

The involved in Mg(2+) ion dislocation from EF-Tu stretch occupies residues T80–V83.

Belongs to the EF-Ts family.

The protein resides in the cytoplasm. Its function is as follows. Associates with the EF-Tu.GDP complex and induces the exchange of GDP to GTP. It remains bound to the aminoacyl-tRNA.EF-Tu.GTP complex up to the GTP hydrolysis stage on the ribosome. The chain is Elongation factor Ts (tsf) from Pasteurella multocida (strain Pm70).